Here is a 309-residue protein sequence, read N- to C-terminus: Sulfate adenylyltransferase subunit 2 (309 aa).

This sequence belongs to the PAPS reductase family. CysD subfamily. Heterodimer composed of CysD, the smaller subunit, and CysN.

The catalysed reaction is sulfate + ATP + H(+) = adenosine 5'-phosphosulfate + diphosphate. Its pathway is sulfur metabolism; hydrogen sulfide biosynthesis; sulfite from sulfate: step 1/3. With CysN forms the ATP sulfurylase (ATPS) that catalyzes the adenylation of sulfate producing adenosine 5'-phosphosulfate (APS) and diphosphate, the first enzymatic step in sulfur assimilation pathway. APS synthesis involves the formation of a high-energy phosphoric-sulfuric acid anhydride bond driven by GTP hydrolysis by CysN coupled to ATP hydrolysis by CysD. The chain is Sulfate adenylyltransferase subunit 2 from Aeromonas salmonicida (strain A449).